The sequence spans 286 residues: Glucose import system permease protein GlcT (286 aa).

6 helical membrane passes run 6 to 26 (TIIL…LVIW), 71 to 91 (VILV…LYFL), 103 to 123 (IVIY…LWLF), 154 to 174 (LVLV…LAGF), 199 to 219 (ILIP…FLFS), and 260 to 280 (VATM…LTVI). The ABC transmembrane type-1 domain maps to 63–275 (LLHSIELSVI…LIATIIIIPY (213 aa)).

This sequence belongs to the binding-protein-dependent transport system permease family. In terms of assembly, the complex is composed of two ATP-binding proteins (GlcV), two transmembrane proteins (GlcT and GlcU) and a solute-binding protein (GlcS).

The protein resides in the cell membrane. Functionally, part of the ABC transporter complex GlcSTUV involved in glucose uptake. Responsible for the translocation of the substrate across the membrane. The protein is Glucose import system permease protein GlcT of Saccharolobus solfataricus (strain ATCC 35092 / DSM 1617 / JCM 11322 / P2) (Sulfolobus solfataricus).